The sequence spans 520 residues: Maturase K (520 aa).

The protein belongs to the intron maturase 2 family. MatK subfamily.

It is found in the plastid. The protein localises to the chloroplast. In terms of biological role, usually encoded in the trnK tRNA gene intron. Probably assists in splicing its own and other chloroplast group II introns. This chain is Maturase K, found in Aspidistra elatior (Cast-iron plant).